The primary structure comprises 154 residues: Xanthine-guanine phosphoribosyltransferase (154 aa).

Residues 38-39 (RG), K71, and 90-98 (DDLVDTGGT) contribute to the 5-phospho-alpha-D-ribose 1-diphosphate site. K71 is a binding site for GMP. D91 is a binding site for Mg(2+). Residues D94 and I137 each coordinate guanine. Residues D94 and I137 each coordinate xanthine. Residues 94 to 98 (DTGGT) and 136 to 137 (WI) each bind GMP.

This sequence belongs to the purine/pyrimidine phosphoribosyltransferase family. XGPT subfamily. In terms of assembly, homotetramer. Mg(2+) serves as cofactor.

Its subcellular location is the cell inner membrane. The catalysed reaction is GMP + diphosphate = guanine + 5-phospho-alpha-D-ribose 1-diphosphate. It catalyses the reaction XMP + diphosphate = xanthine + 5-phospho-alpha-D-ribose 1-diphosphate. It carries out the reaction IMP + diphosphate = hypoxanthine + 5-phospho-alpha-D-ribose 1-diphosphate. It functions in the pathway purine metabolism; GMP biosynthesis via salvage pathway; GMP from guanine: step 1/1. Its pathway is purine metabolism; XMP biosynthesis via salvage pathway; XMP from xanthine: step 1/1. Its function is as follows. Purine salvage pathway enzyme that catalyzes the transfer of the ribosyl-5-phosphate group from 5-phospho-alpha-D-ribose 1-diphosphate (PRPP) to the N9 position of the 6-oxopurines guanine and xanthine to form the corresponding ribonucleotides GMP (guanosine 5'-monophosphate) and XMP (xanthosine 5'-monophosphate), with the release of PPi. To a lesser extent, also acts on hypoxanthine. This chain is Xanthine-guanine phosphoribosyltransferase, found in Buchnera aphidicola subsp. Schizaphis graminum (strain Sg).